The primary structure comprises 141 residues: Large ribosomal subunit protein uL11 (141 aa).

Belongs to the universal ribosomal protein uL11 family. Part of the ribosomal stalk of the 50S ribosomal subunit. Interacts with L10 and the large rRNA to form the base of the stalk. L10 forms an elongated spine to which L12 dimers bind in a sequential fashion forming a multimeric L10(L12)X complex. Post-translationally, one or more lysine residues are methylated.

Forms part of the ribosomal stalk which helps the ribosome interact with GTP-bound translation factors. The polypeptide is Large ribosomal subunit protein uL11 (Fusobacterium nucleatum subsp. nucleatum (strain ATCC 25586 / DSM 15643 / BCRC 10681 / CIP 101130 / JCM 8532 / KCTC 2640 / LMG 13131 / VPI 4355)).